Here is a 225-residue protein sequence, read N- to C-terminus: Insulin-induced gene 2 protein (225 aa).

The Cytoplasmic portion of the chain corresponds to 1-28 (MAEGETESPRPKKCGPYISSVTSQSVNV). Residues 29 to 51 (VIRGVVLFFIGVFLALVLNLLQI) form a helical membrane-spanning segment. Residues 52-70 (QRNVTLFPPDVITSIFSSA) lie on the Lumenal side of the membrane. A helical transmembrane segment spans residues 71-88 (WWVPPCCGTASAVIGLLY). Over 89–103 (PCIDRHLGEPHKFKR) the chain is Cytoplasmic. Residues 104–126 (EWSSVMRCVAVFVGINHASAKVD) form a helical membrane-spanning segment. Over 127-129 (FDN) the chain is Lumenal. The chain crosses the membrane as a helical span at residues 130–148 (NFQFSLTLAALSVGLWWTF). At 149–153 (DRSRS) the chain is on the cytoplasmic side. S151 carries the phosphoserine modification. A helical membrane pass occupies residues 154 to 175 (GFGLGVGIAFLATVVTQLLVYN). Over 176–189 (GVYQYTSPDFLYVR) the chain is Lumenal. Residues 190 to 207 (SWLPCIFFAGGITMGNIG) traverse the membrane as a helical segment. Topologically, residues 208–225 (RQLAMYECKVIAEKSHQE) are cytoplasmic. C215 carries the post-translational modification Cysteine sulfenic acid (-SOH); alternate. Residue C215 forms a Glycyl cysteine thioester (Cys-Gly) (interchain with G-Cter in ubiquitin); alternate linkage. The KxHxx signature appears at 219 to 225 (AEKSHQE).

It belongs to the INSIG family. Interacts with SCAP; interaction is direct and only takes place in the presence of sterols; it prevents interaction between SCAP and the coat protein complex II (COPII). Associates with the SCAP-SREBP complex (composed of SCAP and SREBF1/SREBP1 or SREBF2/SREBP2); association is mediated via its interaction with SCAP and only takes place in the presence of sterols. Interacts with RNF139. Interacts with RNF145. In terms of processing, phosphorylation at Ser-151 by PCK1 reduces binding to oxysterol, disrupting the interaction between INSIG2 and SCAP, thereby promoting nuclear translocation of SREBP proteins (SREBF1/SREBP1 or SREBF2/SREBP2) and subsequent transcription of downstream lipogenesis-related genes. Post-translationally, polyubiquitinated by AMFR/gp78 at Cys-215 in some tissues such as adipose tissues, undifferentiated myoblasts and liver, leading to its degradation. In differentiated myotubes, Cys-215 oxidation prevents ubiquitination at the same site, resulting in protein stabilization. Oxidized at Cys-215 in differentiated myotubes, preventing ubiquitination at the same site, and resulting in protein stabilization. In terms of tissue distribution, expressed in liver, testis, kidney, spleen, intestine, brain and adrenal gland.

The protein resides in the endoplasmic reticulum membrane. Oxysterol-binding protein that mediates feedback control of cholesterol synthesis by controlling both endoplasmic reticulum to Golgi transport of SCAP and degradation of HMGCR. Acts as a negative regulator of cholesterol biosynthesis by mediating the retention of the SCAP-SREBP complex in the endoplasmic reticulum, thereby blocking the processing of sterol regulatory element-binding proteins (SREBPs) SREBF1/SREBP1 and SREBF2/SREBP2. Binds oxysterol, including 22-hydroxycholesterol, 24-hydroxycholesterol, 25-hydroxycholesterol and 27-hydroxycholesterol, regulating interaction with SCAP and retention of the SCAP-SREBP complex in the endoplasmic reticulum. In presence of oxysterol, interacts with SCAP, retaining the SCAP-SREBP complex in the endoplasmic reticulum, thereby preventing SCAP from escorting SREBF1/SREBP1 and SREBF2/SREBP2 to the Golgi. Sterol deprivation or phosphorylation by PCK1 reduce oxysterol-binding, disrupting the interaction between INSIG2 and SCAP, thereby promoting Golgi transport of the SCAP-SREBP complex, followed by processing and nuclear translocation of SREBF1/SREBP1 and SREBF2/SREBP2. Also regulates cholesterol synthesis by regulating degradation of HMGCR: initiates the sterol-mediated ubiquitin-mediated endoplasmic reticulum-associated degradation (ERAD) of HMGCR via recruitment of the reductase to the ubiquitin ligase RNF139. The chain is Insulin-induced gene 2 protein from Mus musculus (Mouse).